The chain runs to 121 residues: MARIAGVDIPRDKRIEVSLTYIYGVGLTRSQAILAKTGVNPDIRVKDLEDGDLQKLRGALENYTVEGDLRRQEGMALKRLQDIGCLRGRRHRMSLPVRGQRTRTNARTRRGARKTVAGKKK.

Residues V97 to K121 are disordered. Residues Q100–K121 show a composition bias toward basic residues.

It belongs to the universal ribosomal protein uS13 family. As to quaternary structure, part of the 30S ribosomal subunit. Forms a loose heterodimer with protein S19. Forms two bridges to the 50S subunit in the 70S ribosome.

Functionally, located at the top of the head of the 30S subunit, it contacts several helices of the 16S rRNA. In the 70S ribosome it contacts the 23S rRNA (bridge B1a) and protein L5 of the 50S subunit (bridge B1b), connecting the 2 subunits; these bridges are implicated in subunit movement. Contacts the tRNAs in the A and P-sites. The chain is Small ribosomal subunit protein uS13 from Synechococcus sp. (strain CC9605).